We begin with the raw amino-acid sequence, 255 residues long: Imidazole glycerol phosphate synthase subunit HisF (255 aa).

Residues D11 and D130 contribute to the active site.

It belongs to the HisA/HisF family. As to quaternary structure, heterodimer of HisH and HisF.

The protein localises to the cytoplasm. The catalysed reaction is 5-[(5-phospho-1-deoxy-D-ribulos-1-ylimino)methylamino]-1-(5-phospho-beta-D-ribosyl)imidazole-4-carboxamide + L-glutamine = D-erythro-1-(imidazol-4-yl)glycerol 3-phosphate + 5-amino-1-(5-phospho-beta-D-ribosyl)imidazole-4-carboxamide + L-glutamate + H(+). It functions in the pathway amino-acid biosynthesis; L-histidine biosynthesis; L-histidine from 5-phospho-alpha-D-ribose 1-diphosphate: step 5/9. Its function is as follows. IGPS catalyzes the conversion of PRFAR and glutamine to IGP, AICAR and glutamate. The HisF subunit catalyzes the cyclization activity that produces IGP and AICAR from PRFAR using the ammonia provided by the HisH subunit. This is Imidazole glycerol phosphate synthase subunit HisF from Akkermansia muciniphila (strain ATCC BAA-835 / DSM 22959 / JCM 33894 / BCRC 81048 / CCUG 64013 / CIP 107961 / Muc).